The chain runs to 569 residues: MGQIVGSMHMNVAEVFSNRRKRKRSTDSSLGKDDPAQLDTTQPKKKKLLTTTQYIYKALFKEEKNSDVAVMALDKVWHLHKVYLSQSPYFYTMFNGTWREAQQNFIQITILDDRITVASLDAVFGSMYSDEIEIESADVISVLATATLFHLDGIIDKCAEVMVDNISPETAIQYYEAACQYGVVGVKKSTFQWFQINLLSIYSKQPNLLRHISIELMSALTASPDLYVMQTEFSLYTLLRTWMFLRLHPDYDPEDPVQRAEALKTQELLVNAGVETHAPSGDVVQWTYFTSRSEERSFLATPEGQPYVKVFQKLRTQYLTNHYMDLKIIYNDNIIPKEWLYRHIHNHWDALLRIDHGQEDCSPQQLDDEQFFENCMRCGRMLLEPGYQKWRWTGFNFGMDLILIMDSRRLNIRRHHRHEHERVLSLQTKRKFMVRTTVTSINAQRQAVFTQTSEICSLSLEKNEEVPLMVLDPKLVHPLLISINMLVVMPPNQSFKEIVPLSEEATTSLSIPISEIGANSDRPLSPSSADDSAVFIGDSEPSTPSSPAPRPRIAWSASETGAICGQLAC.

A disordered region spans residues 17–43 (SNRRKRKRSTDSSLGKDDPAQLDTTQP). Residues 66–136 (SDVAVMALDK…MYSDEIEIES (71 aa)) enclose the BTB domain. The segment at 517–553 (GANSDRPLSPSSADDSAVFIGDSEPSTPSSPAPRPRI) is disordered.

It localises to the cytoplasm. Functionally, required for the specification of pole cells and germ cell formation. Mothers with reduced glc function give rise to sterile adult progeny that lack germ cells. This Drosophila melanogaster (Fruit fly) protein is Protein germ cell-less (gcl).